We begin with the raw amino-acid sequence, 323 residues long: MAKDILIHQIIEVLERAGFMVSNQCNIRPRSFDLAARQGNTLLFCKVLYNIDGLNEETAREMKSLAKYLNGYPILIGAKTRDQLLEDSVVYMRYDIPALSIQTLYDYFVENVPPLVSAAPGGLYVSIDGDVLKEARMNVSMSLGALASELGVSRRTISKYEEGQMDASIDIVLHLEEILDMALAKSIDILRSFEKELDPANVKEEAHEMKTPPNDNILNLIYTLGYDVLSTNQAPFKAVSKDTSSTFLTGVSEYSNAMVKRAHLMSSISNVIETQSVFIIEGKSRYKFVEDTVLIERDELNTIADSDDLDTLIHERAKRHKEE.

The HTH cro/C1-type domain maps to 132–190 (LKEARMNVSMSLGALASELGVSRRTISKYEEGQMDASIDIVLHLEEILDMALAKSIDIL). The H-T-H motif DNA-binding region spans 143–162 (LGALASELGVSRRTISKYEE).

The chain is Putative HTH-type transcriptional regulatory protein Mbur_1811 from Methanococcoides burtonii (strain DSM 6242 / NBRC 107633 / OCM 468 / ACE-M).